A 206-amino-acid polypeptide reads, in one-letter code: Large ribosomal subunit protein uL4 (206 aa).

The disordered stretch occupies residues 49 to 79 (KVKTRSEISRTTKKMYKQKGTGNARHGAASA).

It belongs to the universal ribosomal protein uL4 family. In terms of assembly, part of the 50S ribosomal subunit.

In terms of biological role, one of the primary rRNA binding proteins, this protein initially binds near the 5'-end of the 23S rRNA. It is important during the early stages of 50S assembly. It makes multiple contacts with different domains of the 23S rRNA in the assembled 50S subunit and ribosome. Forms part of the polypeptide exit tunnel. This Methylobacterium sp. (strain 4-46) protein is Large ribosomal subunit protein uL4.